The sequence spans 326 residues: Pyruvate dehydrogenase E1 component subunit alpha (326 aa).

In terms of assembly, heterodimer of an alpha and a beta chain. It depends on thiamine diphosphate as a cofactor.

The enzyme catalyses N(6)-[(R)-lipoyl]-L-lysyl-[protein] + pyruvate + H(+) = N(6)-[(R)-S(8)-acetyldihydrolipoyl]-L-lysyl-[protein] + CO2. The pyruvate dehydrogenase complex catalyzes the overall conversion of pyruvate to acetyl-CoA and CO(2). It contains multiple copies of three enzymatic components: pyruvate dehydrogenase (E1), dihydrolipoamide acetyltransferase (E2) and lipoamide dehydrogenase (E3). This Rickettsia conorii (strain ATCC VR-613 / Malish 7) protein is Pyruvate dehydrogenase E1 component subunit alpha (pdhA).